We begin with the raw amino-acid sequence, 400 residues long: Subtilisin-like protease 7 (400 aa).

A signal peptide spans Met1 to Gly20. A propeptide spanning residues Ala21 to Asn119 is cleaved from the precursor. One can recognise an Inhibitor I9 domain in the interval Lys36–Ile118. An N-linked (GlcNAc...) asparagine glycan is attached at Asn58. The 272-residue stretch at Ser129–Met400 folds into the Peptidase S8 domain. Catalysis depends on charge relay system residues Asp161 and His192. Asn222 and Asn252 each carry an N-linked (GlcNAc...) asparagine glycan. Residue Ser346 is the Charge relay system of the active site. A glycan (N-linked (GlcNAc...) asparagine) is linked at Asn396.

This sequence belongs to the peptidase S8 family.

It is found in the secreted. Its function is as follows. Secreted subtilisin-like serine protease with keratinolytic activity that contributes to pathogenicity. The sequence is that of Subtilisin-like protease 7 (SUB7) from Arthroderma benhamiae (Trichophyton mentagrophytes).